The primary structure comprises 131 residues: Small ribosomal subunit protein uS8 (131 aa).

Belongs to the universal ribosomal protein uS8 family. As to quaternary structure, part of the 30S ribosomal subunit. Contacts proteins S5 and S12.

Functionally, one of the primary rRNA binding proteins, it binds directly to 16S rRNA central domain where it helps coordinate assembly of the platform of the 30S subunit. This Chlorobium chlorochromatii (strain CaD3) protein is Small ribosomal subunit protein uS8.